The sequence spans 434 residues: Prenyltransferase fogH (434 aa).

E86 serves as a coordination point for L-tryptophan. 5 residues coordinate substrate: R101, R248, K250, Y252, and Y346.

This sequence belongs to the tryptophan dimethylallyltransferase family.

The protein operates within secondary metabolite biosynthesis. Functionally, prenyltransferase; part of the gene cluster that mediates the biosynthesis of flavoglaucin and congeners (including aspergin, dihydroauroglaucin and auroglaucin), prenylated salicylaldehyde derivatives carrying a saturated or an unsaturated C-7 side chain. The PKS fogA releases the carboxylic acid (8E,10E,12E)-3,5,7-trihydroxytetradeca-8,10,12-trienoic acid as its product, as well as derivatives with one and two double bonds. FogA is indeed able to reduce the initial triketide, thus being at least partially responsible for the differently saturated heptyl side chains of flavoglaucin congeners. The oxidoreductases fogB, fogC and fogD modify the nascent polyketide in fogA-bound form and, together, fogA, fogB, fogC and fogD are necessary for the formation of the aromatic core and the cyclized PKS products are released as salicyl alcohols. In particular, fogB is responsible for oxidation of a hydroxyl group or reduction of remaining double bond(s) at the C-7 residue whereas fogD is probably involved in the reductive release of the modified PKS products. The cytochrome P450 monooxygenase fogE is then responsible for the hydroxylation at C-3 of the benzene ring. The fogE products are substrates of the prenyltransferase fogH and the prenylated benzyl alcohols are subsequently oxidized by the fogF to produce the final aryl aldehydes flavoglaucin and congeners. The short-chain dehydrogenase fogG does not seem to be involved in the biosynthesis of the prenylated salicylaldehyde derivatives. The protein is Prenyltransferase fogH of Aspergillus ruber (strain CBS 135680).